Here is a 423-residue protein sequence, read N- to C-terminus: GTPase Obg (423 aa).

The Obg domain occupies 1–158 (MFIDTARIYI…MWVRLELKLL (158 aa)). The OBG-type G domain occupies 159 to 329 (ADVGLIGFPN…LLDKTIEILS (171 aa)). GTP contacts are provided by residues 165 to 172 (GFPNAGKS), 190 to 194 (FTTLT), 211 to 214 (DIPG), 281 to 284 (NKID), and 310 to 312 (SAL). Residues S172 and T192 each contribute to the Mg(2+) site. In terms of domain architecture, OCT spans 346–423 (TPPEEEETLN…VRDFEFEYYE (78 aa)).

Belongs to the TRAFAC class OBG-HflX-like GTPase superfamily. OBG GTPase family. In terms of assembly, monomer. Mg(2+) serves as cofactor.

The protein resides in the cytoplasm. In terms of biological role, an essential GTPase which binds GTP, GDP and possibly (p)ppGpp with moderate affinity, with high nucleotide exchange rates and a fairly low GTP hydrolysis rate. Plays a role in control of the cell cycle, stress response, ribosome biogenesis and in those bacteria that undergo differentiation, in morphogenesis control. The protein is GTPase Obg of Thermoanaerobacter pseudethanolicus (strain ATCC 33223 / 39E) (Clostridium thermohydrosulfuricum).